A 277-amino-acid polypeptide reads, in one-letter code: Large ribosomal subunit protein uL2 (277 aa).

The disordered stretch occupies residues 222 to 258 (GSVMNPCDHPHGGGEGRSPIGRPSPVTPWGKPALGYK).

It belongs to the universal ribosomal protein uL2 family. Part of the 50S ribosomal subunit. Forms a bridge to the 30S subunit in the 70S ribosome.

In terms of biological role, one of the primary rRNA binding proteins. Required for association of the 30S and 50S subunits to form the 70S ribosome, for tRNA binding and peptide bond formation. It has been suggested to have peptidyltransferase activity; this is somewhat controversial. Makes several contacts with the 16S rRNA in the 70S ribosome. The chain is Large ribosomal subunit protein uL2 from Clostridium perfringens (strain 13 / Type A).